The sequence spans 89 residues: Meiosis expressed gene 1 protein homolog (89 aa).

This sequence belongs to the MEIG1 family.

This Nematostella vectensis (Starlet sea anemone) protein is Meiosis expressed gene 1 protein homolog.